Consider the following 503-residue polypeptide: Probable cytochrome P450 303a1 (503 aa).

Cys-448 provides a ligand contact to heme.

Belongs to the cytochrome P450 family. It depends on heme as a cofactor.

The protein resides in the endoplasmic reticulum membrane. It localises to the microsome membrane. In terms of biological role, may be involved in the metabolism of insect hormones and in the breakdown of synthetic insecticides. In Drosophila melanogaster (Fruit fly), this protein is Probable cytochrome P450 303a1 (Cyp303a1).